Consider the following 133-residue polypeptide: Phosphomevalonate dehydratase small subunit (133 aa).

Catalysis depends on S62, which acts as the Proton acceptor.

This sequence belongs to the AcnX type II small subunit family. Heterodimer composed of a large subunit (PMDh-L) and a small subunit (PMDh-S).

It carries out the reaction (R)-5-phosphomevalonate = (2E)-3-methyl-5-phosphooxypent-2-enoate + H2O. It participates in isoprenoid biosynthesis; isopentenyl diphosphate biosynthesis via mevalonate pathway. In terms of biological role, component of a hydro-lyase that catalyzes the dehydration of mevalonate 5-phosphate (MVA5P) to form trans-anhydromevalonate 5-phosphate (tAHMP). Involved in the archaeal mevalonate (MVA) pathway, which provides fundamental precursors for isoprenoid biosynthesis, such as isopentenyl diphosphate (IPP) and dimethylallyl diphosphate (DMAPP). The polypeptide is Phosphomevalonate dehydratase small subunit (Thermococcus kodakarensis (strain ATCC BAA-918 / JCM 12380 / KOD1) (Pyrococcus kodakaraensis (strain KOD1))).